The sequence spans 448 residues: Probable glycine dehydrogenase (decarboxylating) subunit 1 (448 aa).

Belongs to the GcvP family. N-terminal subunit subfamily. The glycine cleavage system is composed of four proteins: P, T, L and H. In this organism, the P 'protein' is a heterodimer of two subunits.

It carries out the reaction N(6)-[(R)-lipoyl]-L-lysyl-[glycine-cleavage complex H protein] + glycine + H(+) = N(6)-[(R)-S(8)-aminomethyldihydrolipoyl]-L-lysyl-[glycine-cleavage complex H protein] + CO2. The glycine cleavage system catalyzes the degradation of glycine. The P protein binds the alpha-amino group of glycine through its pyridoxal phosphate cofactor; CO(2) is released and the remaining methylamine moiety is then transferred to the lipoamide cofactor of the H protein. In Rhodospirillum rubrum (strain ATCC 11170 / ATH 1.1.1 / DSM 467 / LMG 4362 / NCIMB 8255 / S1), this protein is Probable glycine dehydrogenase (decarboxylating) subunit 1.